Reading from the N-terminus, the 854-residue chain is Putative Tricorn-like protease C-terminal subunit (854 aa).

His539 (charge relay system) is an active-site residue. Positions 554-646 (PIGGLGADYE…RVTVKLLKDE (93 aa)) are PDZ-like. Gly709 is a binding site for substrate. The active-site Nucleophile is the Ser756. The active-site Charge relay system is the Glu814.

The protein belongs to the peptidase S41B family.

The protein localises to the cytoplasm. In terms of biological role, degrades oligopeptides in a sequential manner. This chain is Putative Tricorn-like protease C-terminal subunit (triC), found in Sulfurisphaera tokodaii (strain DSM 16993 / JCM 10545 / NBRC 100140 / 7) (Sulfolobus tokodaii).